The chain runs to 369 residues: 2-aminoethylphosphonate--pyruvate transaminase 1 (369 aa).

Lysine 191 carries the post-translational modification N6-(pyridoxal phosphate)lysine.

Belongs to the class-V pyridoxal-phosphate-dependent aminotransferase family. PhnW subfamily. In terms of assembly, homodimer. Pyridoxal 5'-phosphate serves as cofactor.

It carries out the reaction (2-aminoethyl)phosphonate + pyruvate = phosphonoacetaldehyde + L-alanine. Functionally, involved in phosphonate degradation. The sequence is that of 2-aminoethylphosphonate--pyruvate transaminase 1 from Burkholderia lata (strain ATCC 17760 / DSM 23089 / LMG 22485 / NCIMB 9086 / R18194 / 383).